The sequence spans 2386 residues: Protein kinase rad3 (2386 aa).

The region spanning 1386–1943 (TLGIVSLNCG…LWQLMATIKS (558 aa)) is the FAT domain. The 319-residue stretch at 2052–2370 (FEDEVDIMNS…QIQELIKSAV (319 aa)) folds into the PI3K/PI4K catalytic domain. Positions 2058-2064 (IMNSLQK) are G-loop. The tract at residues 2227-2235 (GLGDRHGEN) is catalytic loop. The interval 2247 to 2271 (HVDFNCLFDKGLTFEKPEKVPFRLT) is activation loop. In terms of domain architecture, FATC spans 2354-2386 (IPLSIEGQIQELIKSAVNPKNLVEMYIGWAAYF).

This sequence belongs to the PI3/PI4-kinase family. ATM subfamily. As to quaternary structure, interacts with crb2 (via BRCT domain). Interacts with chk1.

Its subcellular location is the nucleus. The catalysed reaction is L-seryl-[protein] + ATP = O-phospho-L-seryl-[protein] + ADP + H(+). It catalyses the reaction L-threonyl-[protein] + ATP = O-phospho-L-threonyl-[protein] + ADP + H(+). In terms of biological role, serine/threonine kinase which activates checkpoint signaling upon genotoxic stresses. Involved in G2 arrest following DNA damage where it phosphorylates chk1. Phosphorylation of 'Thr-73' and 'Ser-80' of checkpoint mediator crb2 promotes its interaction with chk1. It is also involved in the dependence of mitosis on the completion of DNA replication. This chain is Protein kinase rad3 (rad3), found in Schizosaccharomyces pombe (strain 972 / ATCC 24843) (Fission yeast).